We begin with the raw amino-acid sequence, 323 residues long: GDP-mannose 4,6-dehydratase (323 aa).

NADP(+)-binding positions include 11–14 (TGQD), R36, 59–60 (DM), and 81–85 (LAAQS). T126 is a catalytic residue. Residues E128 and Y150 each act as nucleophile in the active site. Residues K154, H180, and R185 each coordinate NADP(+).

Belongs to the NAD(P)-dependent epimerase/dehydratase family. GDP-mannose 4,6-dehydratase subfamily. Homotetramer. Requires NADP(+) as cofactor.

It catalyses the reaction GDP-alpha-D-mannose = GDP-4-dehydro-alpha-D-rhamnose + H2O. Its pathway is bacterial outer membrane biogenesis; lipopolysaccharide biosynthesis. Functionally, catalyzes the conversion of GDP-D-mannose to GDP-4-dehydro-6-deoxy-D-mannose. The polypeptide is GDP-mannose 4,6-dehydratase (Pseudomonas aeruginosa (strain ATCC 15692 / DSM 22644 / CIP 104116 / JCM 14847 / LMG 12228 / 1C / PRS 101 / PAO1)).